A 198-amino-acid chain; its full sequence is MDSLQKQELRRPKIHGAVQVSPYQPPTLASLQRLLWVRRTATLTHINEVWPNLFLGDAYAARDKGRLIQLGITHVVNVAAGKFQVDTGAKFYRGTPLEYYGIEADDNPFFDLSVHFLPVARYIRDALNIPRSRVLVHCAMGVSRSATIVLAFLMIFENMTLVDAIQTVQAHRDICPNSGFLRQLQVLDNRLRRETGRL.

One can recognise a Tyrosine-protein phosphatase domain in the interval 45–193; that stretch reads HINEVWPNLF…LQVLDNRLRR (149 aa). Residue Cys138 is the Phosphocysteine intermediate of the active site.

Belongs to the protein-tyrosine phosphatase family. Non-receptor class dual specificity subfamily. As to expression, most abundantly expressed in the testis.

It catalyses the reaction O-phospho-L-tyrosyl-[protein] + H2O = L-tyrosyl-[protein] + phosphate. The catalysed reaction is O-phospho-L-seryl-[protein] + H2O = L-seryl-[protein] + phosphate. It carries out the reaction O-phospho-L-threonyl-[protein] + H2O = L-threonyl-[protein] + phosphate. Its function is as follows. Dual specificity phosphatase that dephosphorylates MAPK8/JNK and MAPK14/p38, but not MAPK1/ERK2, in vitro. Exhibits intrinsic phosphatase activity towards both phospho-seryl/threonyl and -tyrosyl residues, with similar specific activities in vitro. In Mus musculus (Mouse), this protein is Dual specificity protein phosphatase 13B.